The chain runs to 554 residues: uncharacterized protein (554 aa).

This is an uncharacterized protein from Saccharomyces cerevisiae (strain ATCC 204508 / S288c) (Baker's yeast).